A 654-amino-acid polypeptide reads, in one-letter code: Fimbrin-2 (654 aa).

4 consecutive Calponin-homology (CH) domains span residues 124 to 241, 269 to 372, 394 to 500, and 515 to 623; these read DSEK…KIQL, LPPE…QHRN, SREE…RYNI, and EITD…YWTL. Actin-binding stretches follow at residues 124 to 372 and 394 to 623; these read DSEK…QHRN and SREE…YWTL.

Interacts with F-actin.

Its subcellular location is the cytoplasm. The protein resides in the cytoskeleton. Its function is as follows. Cross-links actin filaments (F-actin). Stabilizes and prevents F-actin depolymerization mediated by profilin. May regulate actin cytoarchitecture, cell cycle, cell division, cell elongation and cytoplasmic tractus. The protein is Fimbrin-2 of Arabidopsis thaliana (Mouse-ear cress).